Here is a 139-residue protein sequence, read N- to C-terminus: Putative pre-16S rRNA nuclease (139 aa).

This sequence belongs to the YqgF nuclease family.

It localises to the cytoplasm. Its function is as follows. Could be a nuclease involved in processing of the 5'-end of pre-16S rRNA. In Rubrobacter xylanophilus (strain DSM 9941 / JCM 11954 / NBRC 16129 / PRD-1), this protein is Putative pre-16S rRNA nuclease.